A 498-amino-acid chain; its full sequence is Protein spinster homolog 3 (498 aa).

Transmembrane regions (helical) follow at residues 49 to 71 (IAVA…IAGV), 87 to 107 (GLLQ…FGYL), 114 to 134 (KLIM…SSFV), 148 to 168 (LVGT…GDLF), 175 to 195 (LMIS…YIIG), 207 to 227 (WALR…VFLI), 260 to 280 (FVWS…LAFW), 309 to 329 (YIFG…GTCI), 343 to 363 (LICA…IVLA), 373 to 393 (FIAI…DILL), 407 to 427 (LQIM…IGAI), and 451 to 471 (LLCP…SLYI).

This sequence belongs to the major facilitator superfamily. Spinster (TC 2.A.1.49) family.

It is found in the membrane. Sphingolipid transporter. This Danio rerio (Zebrafish) protein is Protein spinster homolog 3 (spns3).